The primary structure comprises 471 residues: Heat shock 70 kDa protein 13 (471 aa).

An N-terminal signal peptide occupies residues 1–22 (MAGEMTILGSAVLTLLLAGYLA). Asn184 carries an N-linked (GlcNAc...) asparagine glycan. Residues 316-339 (NDSQKPQNADSKLPEDQLTPGDGH) are disordered.

This sequence belongs to the heat shock protein 70 family. Binds UBQLN2.

It is found in the microsome. Its subcellular location is the endoplasmic reticulum. In terms of biological role, has peptide-independent ATPase activity. This Rattus norvegicus (Rat) protein is Heat shock 70 kDa protein 13 (Hspa13).